We begin with the raw amino-acid sequence, 338 residues long: MIIALDAMGGDFAPASTVEGAIFAAKESKHKILLVGIEKILVGELLKYRGRYDLKSLNIEIINATEFITMDEHPAKAVRQKKDSSLSVCARLVADGKADAFVSMGNSGAAMSAALFYLKRIEGVLRPAISTVFPNFGGHCIIADMGANVDCTPEYLLQFGIMASLFCEKVASVENPRVGLVSIGEESTKGNELTLAAFELLKKADINFIGNVEGRDIPGGKVDVAICDGFVGNVILKLGEGLTEMMLKLIRKEFKQHPMTWASLPFLWLAIKDLRKRVDYSEFGGAPLLGVEGVCIIGHGSSNGKAVKNAIFAGAETAKHNIAAGIKEAILRYNNKVV.

The protein belongs to the PlsX family. In terms of assembly, homodimer. Probably interacts with PlsY.

It localises to the cytoplasm. The enzyme catalyses a fatty acyl-[ACP] + phosphate = an acyl phosphate + holo-[ACP]. It participates in lipid metabolism; phospholipid metabolism. Catalyzes the reversible formation of acyl-phosphate (acyl-PO(4)) from acyl-[acyl-carrier-protein] (acyl-ACP). This enzyme utilizes acyl-ACP as fatty acyl donor, but not acyl-CoA. The protein is Phosphate acyltransferase of Endomicrobium trichonymphae.